We begin with the raw amino-acid sequence, 305 residues long: Tyrosine recombinase XerC (305 aa).

Residues 2–88 (TNKQRLVHLF…ALRSFYKFLL (87 aa)) form the Core-binding (CB) domain. One can recognise a Tyr recombinase domain in the interval 109 to 295 (RIPSFLYEEE…SKDSLRKTYM (187 aa)). Catalysis depends on residues arginine 149, lysine 173, histidine 247, arginine 250, and histidine 273. Tyrosine 282 serves as the catalytic O-(3'-phospho-DNA)-tyrosine intermediate.

This sequence belongs to the 'phage' integrase family. XerC subfamily. As to quaternary structure, forms a cyclic heterotetrameric complex composed of two molecules of XerC and two molecules of XerD.

The protein localises to the cytoplasm. Its function is as follows. Site-specific tyrosine recombinase, which acts by catalyzing the cutting and rejoining of the recombining DNA molecules. The XerC-XerD complex is essential to convert dimers of the bacterial chromosome into monomers to permit their segregation at cell division. It also contributes to the segregational stability of plasmids. The protein is Tyrosine recombinase XerC of Bacillus pumilus (strain SAFR-032).